A 295-amino-acid polypeptide reads, in one-letter code: Nucleotide-binding protein RBAM_031990 (295 aa).

Position 16–23 (16–23 (GMSGAGKT)) interacts with ATP. 67-70 (DLRG) lines the GTP pocket.

The protein belongs to the RapZ-like family.

Its function is as follows. Displays ATPase and GTPase activities. The protein is Nucleotide-binding protein RBAM_031990 of Bacillus velezensis (strain DSM 23117 / BGSC 10A6 / LMG 26770 / FZB42) (Bacillus amyloliquefaciens subsp. plantarum).